The following is a 423-amino-acid chain: Aspartate--tRNA(Asp) ligase (423 aa).

Position 163 (Glu163) interacts with L-aspartate. The interval Gln185–Lys188 is aspartate. Arg207 is a binding site for L-aspartate. Residues Arg207–Glu209, Arg215–Leu217, and Glu346 each bind ATP. The Mg(2+) site is built by Glu346 and Ser349. L-aspartate-binding residues include Ser349 and Arg353. Residue Gly394 to Arg397 participates in ATP binding.

It belongs to the class-II aminoacyl-tRNA synthetase family. Type 2 subfamily. As to quaternary structure, homodimer. It depends on Mg(2+) as a cofactor.

The protein localises to the cytoplasm. The enzyme catalyses tRNA(Asp) + L-aspartate + ATP = L-aspartyl-tRNA(Asp) + AMP + diphosphate. In terms of biological role, catalyzes the attachment of L-aspartate to tRNA(Asp) in a two-step reaction: L-aspartate is first activated by ATP to form Asp-AMP and then transferred to the acceptor end of tRNA(Asp). The sequence is that of Aspartate--tRNA(Asp) ligase from Picrophilus torridus (strain ATCC 700027 / DSM 9790 / JCM 10055 / NBRC 100828 / KAW 2/3).